Reading from the N-terminus, the 494-residue chain is Ribose import ATP-binding protein RbsA (494 aa).

ABC transporter domains lie at Ile3–Ser240 and Ser250–Glu494. Gly35–Ser42 lines the ATP pocket.

Belongs to the ABC transporter superfamily. Ribose importer (TC 3.A.1.2.1) family. In terms of assembly, the complex is composed of an ATP-binding protein (RbsA), two transmembrane proteins (RbsC) and a solute-binding protein (RbsB).

Its subcellular location is the cell membrane. The catalysed reaction is D-ribose(out) + ATP + H2O = D-ribose(in) + ADP + phosphate + H(+). Part of the ABC transporter complex RbsABC involved in ribose import. Responsible for energy coupling to the transport system. This Bacillus cereus (strain ZK / E33L) protein is Ribose import ATP-binding protein RbsA.